The following is a 139-amino-acid chain: D-ribose pyranase (139 aa).

The active-site Proton donor is His20. Substrate contacts are provided by residues Asp28, His106, and 128 to 130; that span reads YAN.

The protein belongs to the RbsD / FucU family. RbsD subfamily. Homodecamer.

The protein resides in the cytoplasm. The enzyme catalyses beta-D-ribopyranose = beta-D-ribofuranose. It functions in the pathway carbohydrate metabolism; D-ribose degradation; D-ribose 5-phosphate from beta-D-ribopyranose: step 1/2. In terms of biological role, catalyzes the interconversion of beta-pyran and beta-furan forms of D-ribose. This Escherichia coli O81 (strain ED1a) protein is D-ribose pyranase.